The following is a 322-amino-acid chain: tRNA uridine(34) hydroxylase (322 aa).

The 95-residue stretch at 125–219 folds into the Rhodanese domain; it reads QDPDTIVIDA…YGKDPEVKGQ (95 aa). Cys179 serves as the catalytic Cysteine persulfide intermediate.

This sequence belongs to the TrhO family.

It carries out the reaction uridine(34) in tRNA + AH2 + O2 = 5-hydroxyuridine(34) in tRNA + A + H2O. In terms of biological role, catalyzes oxygen-dependent 5-hydroxyuridine (ho5U) modification at position 34 in tRNAs. This Bacillus velezensis (strain DSM 23117 / BGSC 10A6 / LMG 26770 / FZB42) (Bacillus amyloliquefaciens subsp. plantarum) protein is tRNA uridine(34) hydroxylase.